Reading from the N-terminus, the 98-residue chain is NADH-ubiquinone oxidoreductase chain 4L (98 aa).

A run of 3 helical transmembrane segments spans residues 1-21 (MMSI…GVLI), 28-48 (STLL…ALLI), and 59-79 (APLV…ALLV).

This sequence belongs to the complex I subunit 4L family. Core subunit of respiratory chain NADH dehydrogenase (Complex I) which is composed of 45 different subunits.

The protein resides in the mitochondrion inner membrane. The catalysed reaction is a ubiquinone + NADH + 5 H(+)(in) = a ubiquinol + NAD(+) + 4 H(+)(out). In terms of biological role, core subunit of the mitochondrial membrane respiratory chain NADH dehydrogenase (Complex I) which catalyzes electron transfer from NADH through the respiratory chain, using ubiquinone as an electron acceptor. Part of the enzyme membrane arm which is embedded in the lipid bilayer and involved in proton translocation. The chain is NADH-ubiquinone oxidoreductase chain 4L (MT-ND4L) from Pseudocheirus peregrinus (Common ring-tailed possum).